The sequence spans 940 residues: UvrABC system protein A (940 aa).

Residue 31–38 coordinates ATP; the sequence is GLSGSGKS. The C4-type zinc-finger motif lies at 252-279; that stretch reads CPQCGYSMQELEPRLFSFNNPAGACGTC. 2 ABC transporter domains span residues 309–586 and 606–936; these read WDQK…PNSL and RDPK…RFLK. ATP is bound at residue 639–646; it reads GVSGSGKS. Residues 739-765 form a C4-type zinc finger; sequence CEACQGDGVIKVEMHFLPDVYVPCDVC.

Belongs to the ABC transporter superfamily. UvrA family. Forms a heterotetramer with UvrB during the search for lesions.

It localises to the cytoplasm. Functionally, the UvrABC repair system catalyzes the recognition and processing of DNA lesions. UvrA is an ATPase and a DNA-binding protein. A damage recognition complex composed of 2 UvrA and 2 UvrB subunits scans DNA for abnormalities. When the presence of a lesion has been verified by UvrB, the UvrA molecules dissociate. This is UvrABC system protein A from Vibrio parahaemolyticus serotype O3:K6 (strain RIMD 2210633).